Reading from the N-terminus, the 367-residue chain is Nuclear hormone receptor-like 1 (367 aa).

Residues 32–107 (GQPCVVCGDD…NGMTKSLVLN (76 aa)) constitute a DNA-binding region (nuclear receptor). 2 consecutive NR C4-type zinc fingers follow at residues 35–55 (CVVCGDDATGLHYRAITCEGC) and 71–95 (CKSIERCEISKISRNICQFCRFQKC). An NR LBD domain is found at 145–367 (EFQSRIDQVT…IANILLFKFT (223 aa)).

It belongs to the nuclear hormone receptor family.

Its subcellular location is the nucleus. The polypeptide is Nuclear hormone receptor-like 1 (nhr-1) (Onchocerca volvulus).